The chain runs to 341 residues: Glycerol-3-phosphate dehydrogenase [NAD(P)+] (341 aa).

Residues serine 14, phenylalanine 15, arginine 35, and lysine 108 each coordinate NADPH. Sn-glycerol 3-phosphate-binding residues include lysine 108 and glycine 136. NADPH is bound at residue alanine 140. The sn-glycerol 3-phosphate site is built by lysine 191, aspartate 244, serine 254, arginine 255, and asparagine 256. Lysine 191 functions as the Proton acceptor in the catalytic mechanism. Position 255 (arginine 255) interacts with NADPH. NADPH is bound by residues valine 279 and glutamate 281.

Belongs to the NAD-dependent glycerol-3-phosphate dehydrogenase family.

Its subcellular location is the cytoplasm. The enzyme catalyses sn-glycerol 3-phosphate + NAD(+) = dihydroxyacetone phosphate + NADH + H(+). It carries out the reaction sn-glycerol 3-phosphate + NADP(+) = dihydroxyacetone phosphate + NADPH + H(+). The protein operates within membrane lipid metabolism; glycerophospholipid metabolism. Its function is as follows. Catalyzes the reduction of the glycolytic intermediate dihydroxyacetone phosphate (DHAP) to sn-glycerol 3-phosphate (G3P), the key precursor for phospholipid synthesis. In Pseudomonas fluorescens (strain SBW25), this protein is Glycerol-3-phosphate dehydrogenase [NAD(P)+].